A 37-amino-acid chain; its full sequence is Large ribosomal subunit protein bL36 (37 aa).

This sequence belongs to the bacterial ribosomal protein bL36 family.

The polypeptide is Large ribosomal subunit protein bL36 (Synechococcus sp. (strain CC9605)).